A 245-amino-acid chain; its full sequence is 5'-nucleotidase SurE (245 aa).

Aspartate 8, aspartate 9, serine 39, and asparagine 91 together coordinate a divalent metal cation.

It belongs to the SurE nucleotidase family. A divalent metal cation is required as a cofactor.

The protein resides in the cytoplasm. It catalyses the reaction a ribonucleoside 5'-phosphate + H2O = a ribonucleoside + phosphate. Its function is as follows. Nucleotidase that shows phosphatase activity on nucleoside 5'-monophosphates. In Janthinobacterium sp. (strain Marseille) (Minibacterium massiliensis), this protein is 5'-nucleotidase SurE.